A 397-amino-acid chain; its full sequence is 2,6-dihydroxypyridine 3-monooxygenase (397 aa).

FAD-binding positions include 14-16 (SIS), 35-36 (ER), Val49, Leu120, Asp306, and 316-320 (AAGGA).

In terms of assembly, homodimer. Requires FAD as cofactor.

It catalyses the reaction 2,6-dihydroxypyridine + NADH + O2 + H(+) = 2,3,6-trihydroxypyridine + NAD(+) + H2O. Its pathway is alkaloid degradation; nicotine degradation. Its function is as follows. Catalyzes the conversion of 2,6-dihydroxypyridine into 2,3,6-trihydroxypyridine in the nicotine degradation pathway. This Paenarthrobacter nicotinovorans (Arthrobacter nicotinovorans) protein is 2,6-dihydroxypyridine 3-monooxygenase (dhpH).